The chain runs to 402 residues: Coiled-coil domain-containing protein 188 (402 aa).

3 disordered regions span residues 1–30, 50–74, and 108–131; these read MEGL…GGGL, HSVQ…EGEA, and HPGS…PCPC. Residues 154-189 are a coiled coil; the sequence is GLLGSAEQSFLQLEQENHSLKRQNQELREQLGALLG. Residues 347–363 form a helical membrane-spanning segment; it reads LLLGALLVWTAAYVYVV.

The protein localises to the membrane. The protein is Coiled-coil domain-containing protein 188 of Homo sapiens (Human).